A 168-amino-acid chain; its full sequence is Vitelline membrane protein Vm26Ab (168 aa).

Positions 1 to 23 (MAFNFGHLLIAGLVALSAVSSET) are cleaved as a signal peptide. The propeptide at 24 to 42 (IQLQPTQGILIPAPLAENI) is removed between stage 11 and 14 of oogenesis. Residues 43–46 (RVSR) form an essential for N-terminal propeptide removal. Potential serine protease cleavage site region. Positions 52–119 (YGAAPAAPSY…PAYSAPASIP (68 aa)) are 8 X 8 AA approximate repeats of P-[AS]-Y-S-A-P-A-[AS]. Residues 55 to 58 (APAA) form a 1; half-length repeat. The stretch at 59–66 (PSYSAPAA) is repeat 2. Residues 70–77 (QAYSAPAA) form a 3; approximate repeat. A run of 5 repeats spans residues 78-85 (PAYSAPAA), 86-93 (PAYSAPAA), 94-101 (PAYSAPAA), 102-109 (PAYSAPAA), and 110-117 (PAYSAPAS). Positions 117 to 154 (SIPSPPCPKNYLFSCQPSLQPVPCSAPAQSYGSAGAYS) constitute a VM domain. The propeptide at 155–168 (QYVPQYAVPFVREL) is removed between stage 9 and 12 of oogenesis.

Belongs to the vitelline membrane protein family. As to quaternary structure, interacts with vml and Vm26Aa; forms part of a disulfide-linked network within the vitelline membrane of stage 10 egg chambers. Proteolytically processed after secretion into the perivitelline space. Undergoes several proteolytic processing steps during formation of the vitelline membrane; an initial processing step removing a C-terminal propeptide occurs between stage 9 and 12 of oogenesis while a second removing a N-terminal propeptide occurs between stage 11 and 14. Post-translationally, becomes part of a disulfide-linked network including other vitelline membrane proteins, including vml and Vm26Aa, during vitelline membrane biogenesis and maturation. Cys-123, Cys-131 and Cys-140 are involved in disulfide network formation, with Cys-131 being the most important. Undergoes both disulfide and non-disulfide cross-linking upon incorporation into the vitelline membrane. As to expression, follicle cells.

It is found in the secreted. Its subcellular location is the extracellular space. The protein resides in the extracellular matrix. In terms of biological role, major early eggshell protein secreted by follicle cells into the perivitelline space and incorporated into the vitelline membrane. Involved in vitelline membrane biogenesis; forms a cross-linked network with other vitelline membrane components. The sequence is that of Vitelline membrane protein Vm26Ab from Drosophila melanogaster (Fruit fly).